Here is a 92-residue protein sequence, read N- to C-terminus: Acyl carrier protein (92 aa).

A Carrier domain is found at 1-84 (MPSTADERQL…QIAAHLAEAV (84 aa)). S44 carries the post-translational modification O-(pantetheine 4'-phosphoryl)serine.

Belongs to the acyl carrier protein (ACP) family. 4'-phosphopantetheine is transferred from CoA to a specific serine of apo-ACP by AcpS. This modification is essential for activity because fatty acids are bound in thioester linkage to the sulfhydryl of the prosthetic group.

The protein localises to the cytoplasm. It functions in the pathway lipid metabolism; fatty acid biosynthesis. Its function is as follows. Carrier of the growing fatty acid chain in fatty acid biosynthesis. The protein is Acyl carrier protein of Streptomyces coelicolor (strain ATCC BAA-471 / A3(2) / M145).